Here is a 344-residue protein sequence, read N- to C-terminus: Protein RecA (344 aa).

66–73 (GPESSGKT) contacts ATP.

The protein belongs to the RecA family.

The protein resides in the cytoplasm. Can catalyze the hydrolysis of ATP in the presence of single-stranded DNA, the ATP-dependent uptake of single-stranded DNA by duplex DNA, and the ATP-dependent hybridization of homologous single-stranded DNAs. It interacts with LexA causing its activation and leading to its autocatalytic cleavage. This is Protein RecA from Methylobacillus flagellatus (strain ATCC 51484 / DSM 6875 / VKM B-1610 / KT).